The chain runs to 184 residues: Protein GrpE (184 aa).

Residues 1 to 26 (MANEQNEQAQDIQNEQVEQSNEQTQA) show a composition bias toward polar residues. Residues 1 to 34 (MANEQNEQAQDIQNEQVEQSNEQTQAEGVEQAND) are disordered.

This sequence belongs to the GrpE family. Homodimer.

It is found in the cytoplasm. In terms of biological role, participates actively in the response to hyperosmotic and heat shock by preventing the aggregation of stress-denatured proteins, in association with DnaK and GrpE. It is the nucleotide exchange factor for DnaK and may function as a thermosensor. Unfolded proteins bind initially to DnaJ; upon interaction with the DnaJ-bound protein, DnaK hydrolyzes its bound ATP, resulting in the formation of a stable complex. GrpE releases ADP from DnaK; ATP binding to DnaK triggers the release of the substrate protein, thus completing the reaction cycle. Several rounds of ATP-dependent interactions between DnaJ, DnaK and GrpE are required for fully efficient folding. The chain is Protein GrpE from Acinetobacter baumannii (strain AB307-0294).